Here is a 388-residue protein sequence, read N- to C-terminus: Alanine racemase (388 aa).

Catalysis depends on K44, which acts as the Proton acceptor; specific for D-alanine. An N6-(pyridoxal phosphate)lysine modification is found at K44. R142 is a substrate binding site. The active-site Proton acceptor; specific for L-alanine is the Y273. Substrate is bound at residue M321.

The protein belongs to the alanine racemase family. Pyridoxal 5'-phosphate serves as cofactor.

The catalysed reaction is L-alanine = D-alanine. It participates in amino-acid biosynthesis; D-alanine biosynthesis; D-alanine from L-alanine: step 1/1. Catalyzes the interconversion of L-alanine and D-alanine. May also act on other amino acids. This Mycobacterium ulcerans (strain Agy99) protein is Alanine racemase (alr).